The sequence spans 478 residues: RNA pseudouridine synthase 3, mitochondrial (478 aa).

The N-terminal 20 residues, 1-20 (MWKAKTCFRQIYLTVLIRRY), are a transit peptide targeting the mitochondrion. The S4 RNA-binding domain maps to 92-162 (EEIYDKAIQT…MRISKRYDTI (71 aa)). Residue D232 is part of the active site.

This sequence belongs to the pseudouridine synthase RluA family.

It localises to the mitochondrion. It catalyses the reaction a uridine in RNA = a pseudouridine in RNA. The sequence is that of RNA pseudouridine synthase 3, mitochondrial from Arabidopsis thaliana (Mouse-ear cress).